A 145-amino-acid chain; its full sequence is D-aminoacyl-tRNA deacylase (145 aa).

The short motif at 137–138 is the Gly-cisPro motif, important for rejection of L-amino acids element; that stretch reads GP.

Belongs to the DTD family. Homodimer.

The protein localises to the cytoplasm. It catalyses the reaction glycyl-tRNA(Ala) + H2O = tRNA(Ala) + glycine + H(+). The catalysed reaction is a D-aminoacyl-tRNA + H2O = a tRNA + a D-alpha-amino acid + H(+). Functionally, an aminoacyl-tRNA editing enzyme that deacylates mischarged D-aminoacyl-tRNAs. Also deacylates mischarged glycyl-tRNA(Ala), protecting cells against glycine mischarging by AlaRS. Acts via tRNA-based rather than protein-based catalysis; rejects L-amino acids rather than detecting D-amino acids in the active site. By recycling D-aminoacyl-tRNA to D-amino acids and free tRNA molecules, this enzyme counteracts the toxicity associated with the formation of D-aminoacyl-tRNA entities in vivo and helps enforce protein L-homochirality. The polypeptide is D-aminoacyl-tRNA deacylase (Ruegeria pomeroyi (strain ATCC 700808 / DSM 15171 / DSS-3) (Silicibacter pomeroyi)).